Consider the following 542-residue polypeptide: Prolyl 4-hydroxylase subunit alpha-3 (542 aa).

An N-terminal signal peptide occupies residues Met-1–Gly-24. The stretch at Leu-105–Glu-129 forms a coiled coil. A TPR repeat occupies Glu-225 to Asn-258. Residue Asn-240 is glycosylated (N-linked (GlcNAc...) asparagine). The Fe2OG dioxygenase domain maps to Tyr-420–Glu-527. Fe cation-binding residues include His-438 and Asp-440. Residue Asn-480 is glycosylated (N-linked (GlcNAc...) asparagine). His-508 is a binding site for Fe cation. Lys-518 lines the 2-oxoglutarate pocket.

Belongs to the P4HA family. In terms of assembly, heterotetramer of two alpha-3 chains and two beta chains (the beta chain is the multi-functional PDI). Fe(2+) is required as a cofactor. It depends on L-ascorbate as a cofactor. N-glycosylation plays no role in the catalytic activity.

Its subcellular location is the endoplasmic reticulum lumen. It catalyses the reaction L-prolyl-[collagen] + 2-oxoglutarate + O2 = trans-4-hydroxy-L-prolyl-[collagen] + succinate + CO2. In terms of biological role, catalyzes the post-translational formation of 4-hydroxyproline in -Xaa-Pro-Gly- sequences in collagens and other proteins. This chain is Prolyl 4-hydroxylase subunit alpha-3 (P4ha3), found in Mus musculus (Mouse).